Here is a 134-residue protein sequence, read N- to C-terminus: MEFVMKQALGGATKDMGKMLGGDEEKDPDAAKKEEERQEALRQAEEERKAKYAKMEAEREVMRQGIRDKYGIKKKEEREAEAQAAMEANSEGSLTRPKKAIPPGCGDEPEEEDESILDTVIKYLPGPLQDMFKK.

Disordered regions lie at residues Met1 to Glu60 and Lys74 to Glu114. A compositionally biased stretch (basic and acidic residues) spans Asp15–Glu60. Positions Asp29–Gln64 form a coiled coil. The tract at residues Arg48 to Tyr70 is interaction with the SNARE complex.

Belongs to the complexin/synaphin family. As to quaternary structure, binds to the SNARE core complex containing SNAP25, VAMP2 and STX1A. As to expression, nervous system, and pancreatic islet cells. Present in many brain regions, including hippocampus and cerebellum. In the retina, present at conventional amacrine cell synapses (at protein level).

It localises to the cytoplasm. Its subcellular location is the cytosol. The protein localises to the perikaryon. It is found in the presynapse. Positively regulates a late step in exocytosis of various cytoplasmic vesicles, such as synaptic vesicles and other secretory vesicles. Organizes the SNAREs into a cross-linked zigzag topology that, when interposed between the vesicle and plasma membranes, is incompatible with fusion, thereby preventing SNAREs from releasing neurotransmitters until an action potential arrives at the synapse. Also involved in glucose-induced secretion of insulin by pancreatic beta-cells. Essential for motor behavior. The sequence is that of Complexin-1 (Cplx1) from Mus musculus (Mouse).